The following is a 182-amino-acid chain: Adenine phosphoribosyltransferase (182 aa).

The protein belongs to the purine/pyrimidine phosphoribosyltransferase family. In terms of assembly, homodimer.

It is found in the cytoplasm. It carries out the reaction AMP + diphosphate = 5-phospho-alpha-D-ribose 1-diphosphate + adenine. It functions in the pathway purine metabolism; AMP biosynthesis via salvage pathway; AMP from adenine: step 1/1. In terms of biological role, catalyzes a salvage reaction resulting in the formation of AMP, that is energically less costly than de novo synthesis. This chain is Adenine phosphoribosyltransferase, found in Campylobacter curvus (strain 525.92).